Reading from the N-terminus, the 477-residue chain is ATP synthase subunit beta, chloroplastic (477 aa).

ATP is bound at residue Gly156–Thr163.

Belongs to the ATPase alpha/beta chains family. In terms of assembly, F-type ATPases have 2 components, CF(1) - the catalytic core - and CF(0) - the membrane proton channel. CF(1) has five subunits: alpha(3), beta(3), gamma(1), delta(1), epsilon(1). CF(0) has four main subunits: a(1), b(1), b'(1) and c(9-12).

The protein resides in the plastid. It localises to the chloroplast thylakoid membrane. The enzyme catalyses ATP + H2O + 4 H(+)(in) = ADP + phosphate + 5 H(+)(out). Its function is as follows. Produces ATP from ADP in the presence of a proton gradient across the membrane. The catalytic sites are hosted primarily by the beta subunits. This chain is ATP synthase subunit beta, chloroplastic, found in Bigelowiella natans (Pedinomonas minutissima).